The primary structure comprises 369 residues: Glutamate 5-kinase (369 aa).

Residue lysine 9 coordinates ATP. Serine 49, aspartate 136, and asparagine 148 together coordinate substrate. Residues 168 to 169 (TD) and 210 to 216 (TGGMLTK) each bind ATP. In terms of domain architecture, PUA spans 275–355 (RGGVYVDEGA…KGVFIHRDDW (81 aa)).

It belongs to the glutamate 5-kinase family.

The protein resides in the cytoplasm. It carries out the reaction L-glutamate + ATP = L-glutamyl 5-phosphate + ADP. Its pathway is amino-acid biosynthesis; L-proline biosynthesis; L-glutamate 5-semialdehyde from L-glutamate: step 1/2. Its function is as follows. Catalyzes the transfer of a phosphate group to glutamate to form L-glutamate 5-phosphate. This is Glutamate 5-kinase from Neisseria meningitidis serogroup A / serotype 4A (strain DSM 15465 / Z2491).